The chain runs to 741 residues: Aspartyl/asparaginyl beta-hydroxylase (741 aa).

A disordered region spans residues 1-54 (MAPRKNAKGGGGNSSSSGSGSGSGSGSPSTGSSGSSSSPGARREAKHGGHKNGR). Residues 1–62 (MAPRKNAKGG…GRRGGISGGS (62 aa)) are Cytoplasmic-facing. Gly residues predominate over residues 8–25 (KGGGGNSSSSGSGSGSGS). Ser-15 is modified (phosphoserine). Residues 26–40 (GSPSTGSSGSSSSPG) show a composition bias toward low complexity. A helical; Signal-anchor for type II membrane protein membrane pass occupies residues 63-83 (FFTWFMVIALLGVWTSVAVVW). Residues 84 to 741 (FDLVDYEEVL…PQQRRSLPAI (658 aa)) lie on the Lumenal side of the membrane. Ca(2+) is bound by residues Asp-100, Asp-102, Asp-104, Asp-106, and Asp-111. Disordered stretches follow at residues 120–141 (ERSPSERTFPPEEEAETHAELE) and 222–244 (TASQNHPNDMEEMTNEQENSDPS). Over residues 231 to 242 (MEEMTNEQENSD) the composition is skewed to acidic residues. TPR repeat units follow at residues 324 to 357 (IKAELDAAEKLRKRGKIEEAVNAFEELVRKYPQS), 365 to 398 (AQCEDDLAEKQRSNEVLRRAIETYQEAADLPDAP), 437 to 470 (TTLKNDLGVGYLLLGDNDSAKKVYEEVLNVTPND), 472 to 504 (FAKVHYGFILKAQNKISESIPYLKEGIESGDPG), and 508 to 540 (GRFYFHLGDAMQRVGNKEAYKWYELGHKRGHFA). N-linked (GlcNAc...) asparagine glycosylation is present at Asn-453. Trp-608 serves as a coordination point for 2-oxoglutarate. Residues Cys-624 and Cys-631 are joined by a disulfide bond. 2-oxoglutarate is bound at residue Ser-651. His-662 is a binding site for Fe cation. 671–673 (RMH) contacts 2-oxoglutarate. Asn-689 carries N-linked (GlcNAc...) asparagine glycosylation. Position 708 (His-708) interacts with Fe cation. Arg-718 serves as a coordination point for 2-oxoglutarate.

It belongs to the aspartyl/asparaginyl beta-hydroxylase family. In terms of assembly, monomer. Isoform 2 interacts with CASQ2. Fe cation is required as a cofactor. Isoform 1 is detected in heart, liver and ovary (at protein level). Detected in heart ventricle. Isoform 1 is widely expressed. Isoform 2 is detected in heart and skeletal muscle.

The protein resides in the endoplasmic reticulum membrane. It is found in the sarcoplasmic reticulum membrane. It catalyses the reaction L-aspartyl-[protein] + 2-oxoglutarate + O2 = 3-hydroxy-L-aspartyl-[protein] + succinate + CO2. Specifically hydroxylates an Asp or Asn residue in certain epidermal growth factor-like (EGF) domains of a number of proteins. The sequence is that of Aspartyl/asparaginyl beta-hydroxylase (Asph) from Mus musculus (Mouse).